Consider the following 625-residue polypeptide: Isocitrate dehydrogenase kinase/phosphatase (625 aa).

ATP-binding positions include 325–331 (APGIKGM) and K346. D381 is an active-site residue. The disordered stretch occupies residues 596–625 (RRHSPGRNDHELLTHLPPEPMLTGLSGMTP).

It belongs to the AceK family.

Its subcellular location is the cytoplasm. The enzyme catalyses L-seryl-[isocitrate dehydrogenase] + ATP = O-phospho-L-seryl-[isocitrate dehydrogenase] + ADP + H(+). Functionally, bifunctional enzyme which can phosphorylate or dephosphorylate isocitrate dehydrogenase (IDH) on a specific serine residue. This is a regulatory mechanism which enables bacteria to bypass the Krebs cycle via the glyoxylate shunt in response to the source of carbon. When bacteria are grown on glucose, IDH is fully active and unphosphorylated, but when grown on acetate or ethanol, the activity of IDH declines drastically concomitant with its phosphorylation. The sequence is that of Isocitrate dehydrogenase kinase/phosphatase from Polaromonas sp. (strain JS666 / ATCC BAA-500).